The chain runs to 241 residues: Purine nucleoside phosphorylase DeoD-type 1 (241 aa).

His5 is a binding site for a purine D-ribonucleoside. Residues Gly21, Arg25, Arg44, and 88 to 91 (RVGS) each bind phosphate. A purine D-ribonucleoside-binding positions include 180-182 (EME) and 204-205 (SD). Asp205 functions as the Proton donor in the catalytic mechanism.

It belongs to the PNP/UDP phosphorylase family. In terms of assembly, homohexamer; trimer of homodimers.

The enzyme catalyses a purine D-ribonucleoside + phosphate = a purine nucleobase + alpha-D-ribose 1-phosphate. It carries out the reaction a purine 2'-deoxy-D-ribonucleoside + phosphate = a purine nucleobase + 2-deoxy-alpha-D-ribose 1-phosphate. Catalyzes the reversible phosphorolytic breakdown of the N-glycosidic bond in the beta-(deoxy)ribonucleoside molecules, with the formation of the corresponding free purine bases and pentose-1-phosphate. This chain is Purine nucleoside phosphorylase DeoD-type 1, found in Vibrio cholerae serotype O1 (strain ATCC 39315 / El Tor Inaba N16961).